A 92-amino-acid polypeptide reads, in one-letter code: PqqA binding protein (92 aa).

The protein belongs to the PqqD family. Monomer. Interacts with PqqE.

The protein operates within cofactor biosynthesis; pyrroloquinoline quinone biosynthesis. Functions as a PqqA binding protein and presents PqqA to PqqE, in the pyrroloquinoline quinone (PQQ) biosynthetic pathway. In Azotobacter vinelandii (strain DJ / ATCC BAA-1303), this protein is PqqA binding protein.